The sequence spans 100 residues: Apolipoprotein C-II (100 aa).

A signal peptide spans 1-22; that stretch reads MDSRFLLALFLVLLVLGCEVQA. A lipid binding region spans residues 66-74; that stretch reads SVDEKLRDM. The segment at 78 to 100 is lipoprotein lipase cofactor; it reads SSAAMTTYAIIFTDQILTLLKGE.

This sequence belongs to the apolipoprotein C2 family. Post-translationally, proapolipoprotein C-II is synthesized as a sialic acid containing glycoprotein which is subsequently desialylated prior to its proteolytic processing. In terms of processing, proapolipoprotein C-II, the major form found in plasma undergoes proteolytic cleavage of its N-terminal hexapeptide to generate the mature form apolipoprotein C-II, which occurs as the minor form in plasma.

Its subcellular location is the secreted. Functionally, component of chylomicrons, very low-density lipoproteins (VLDL), low-density lipoproteins (LDL), and high-density lipoproteins (HDL) in plasma. Plays an important role in lipoprotein metabolism as an activator of lipoprotein lipase. The polypeptide is Apolipoprotein C-II (APOC2) (Myodes glareolus (Bank vole)).